The sequence spans 411 residues: MATINDHYLKLKAGYLFPEIARRVNAFAAAQPDAQIIRLGIGDVTEPLPAACRTAMIKAVEDMGDRSSFRGYGPEQGYEWLRQSIAEHDFQRRGCEIDASEIFVSDGSKCDTGNILDIFGDNNTIAVTDPVYPVYVDTNVMAGHTGAANEQGEYAGLVYLPVTAENGFTASLPEQKVDLIYLCFPNNPTGATASRAHLQQWVDYARANGSIIFFDAAYEAFITDPDLPHSIYEIPGARSCAIEFRSFSKNAGFTGTRCALTVVPKTLTAKAADGSEVEIWKLWNRRQSTKFNGVSYIVQRGAEAVYSPEGQAEVKGLVSFYLENARIIREQLSANGLAVYGGVNAPYVWVKTPSGFSSWEFFDKLLHTCHVVVTPGSGFGAAGEGYFRVSAFNSRANVEMAMQRIREKLAT.

Residues Tyr-15 and Gly-42 each coordinate substrate. Residues Tyr-72, 108-109, Tyr-132, Asn-187, Tyr-218, and 246-248 each bind pyridoxal 5'-phosphate; these read SK and SFS. Substrate contacts are provided by Lys-109, Tyr-132, and Asn-187. Lys-249 is subject to N6-(pyridoxal phosphate)lysine. Pyridoxal 5'-phosphate-binding residues include Arg-257 and Asn-292. 2 residues coordinate substrate: Asn-292 and Arg-388.

Belongs to the class-I pyridoxal-phosphate-dependent aminotransferase family. LL-diaminopimelate aminotransferase subfamily. In terms of assembly, homodimer. It depends on pyridoxal 5'-phosphate as a cofactor.

It catalyses the reaction (2S,6S)-2,6-diaminopimelate + 2-oxoglutarate = (S)-2,3,4,5-tetrahydrodipicolinate + L-glutamate + H2O + H(+). It participates in amino-acid biosynthesis; L-lysine biosynthesis via DAP pathway; LL-2,6-diaminopimelate from (S)-tetrahydrodipicolinate (aminotransferase route): step 1/1. Its function is as follows. Involved in the synthesis of meso-diaminopimelate (m-DAP or DL-DAP), required for both lysine and peptidoglycan biosynthesis. Catalyzes the direct conversion of tetrahydrodipicolinate to LL-diaminopimelate. This Cyanothece sp. (strain PCC 7425 / ATCC 29141) protein is LL-diaminopimelate aminotransferase.